We begin with the raw amino-acid sequence, 510 residues long: Facilitated glucose transporter protein 1 (510 aa).

The disordered stretch occupies residues 1-29 (MSEKSRSDTSATASLSDSSKSPSSYSTPG). At 1 to 46 (MSEKSRSDTSATASLSDSSKSPSSYSTPGTTTQKIIFPDGKLTKCL) the chain is on the cytoplasmic side. Low complexity predominate over residues 8–29 (DTSATASLSDSSKSPSSYSTPG). A helical membrane pass occupies residues 47–67 (AFSAFVITLASFQFGYHIGCV). Residues 68-100 (NAPGGLITEWIIGSHKDLFDKELSRENADLAWS) lie on the Extracellular side of the membrane. A helical transmembrane segment spans residues 101–121 (VAVSVFAVGGMIGGLSSGWLA). Residues 122–127 (DKVGRR) are Cytoplasmic-facing. Residues 128–146 (GALFYNNLLALAAAALMGL) traverse the membrane as a helical segment. The Extracellular portion of the chain corresponds to 147 to 160 (AKSVGAYPMVILGR). The chain crosses the membrane as a helical span at residues 161 to 181 (LIIGLNCGFSSALVPMFLTEI). Residues 182-195 (SPNNLRGMLGSLHQ) lie on the Cytoplasmic side of the membrane. Glutamine 195 lines the D-glucose pocket. A helical transmembrane segment spans residues 196–216 (LLVTIAILVSQIFGLPHLLGT). Topologically, residues 217–219 (GDR) are extracellular. Residues 220–240 (WPLIFAFTVVPAVLQLALLML) form a helical membrane-spanning segment. At 241–299 (CPESPKYTMAVRGQRNEAESALKKLRDTEDVSTEIEAMQEEATAAGVQEKPKMGDMFKG) the chain is on the cytoplasmic side. A helical membrane pass occupies residues 300 to 320 (ALLWPMSIAIMMMLAQQLSGI). D-glucose contacts are provided by residues 315–316 (QQ), asparagine 321, and asparagine 352. At 321–341 (NVAMFYSTVIFRGAGLTGNEP) the chain is on the extracellular side. The chain crosses the membrane as a helical span at residues 342 to 362 (FYATIGMGAVNVIMTLISVWL). Residues 363 to 373 (VDHPKFGRRSL) lie on the Cytoplasmic side of the membrane. The chain crosses the membrane as a helical span at residues 374-394 (LLAGLTGMFVSTLLLVGALTI). Residues 395-409 (QNSGGDKWASYSAIG) are Extracellular-facing. Residues 410–430 (FVLLFVISFATGPGAIPWFFV) traverse the membrane as a helical segment. Tryptophan 427 contributes to the D-glucose binding site. Over 431–445 (SEIFDSSARGNANSI) the chain is Cytoplasmic. A helical membrane pass occupies residues 446–464 (AVMVNWAANLLVGLTFLPI). Residues 465-470 (NNLMQQ) lie on the Extracellular side of the membrane. A helical membrane pass occupies residues 471–491 (YSFFIFSGFLAFFIFYTWKFV). Over 492 to 510 (PETKGKSIEQIQAEFEKRK) the chain is Cytoplasmic.

Belongs to the major facilitator superfamily. Sugar transporter (TC 2.A.1.1) family. Glucose transporter subfamily. As to expression, isoform a is expressed in pharyngeal muscle and intestinal cells in both embryos and adults (at protein level).

The protein resides in the cell membrane. It localises to the basolateral cell membrane. In terms of biological role, facilitative glucose transporter that plays a role in glucose metabolism and regulation of longevity. May also play a role in lipid metabolism. Glucose transport activity of isoform a is competitively inhibited by mannose, galactose and fructose, suggesting ability to transport also other hexose sugars. This chain is Facilitated glucose transporter protein 1, found in Caenorhabditis elegans.